The chain runs to 101 residues: MIPGEILTDDGEHELNAGRPTLTVVVANTGDRPVQVGSHYHFFEANDALSFDRAAARGFRLNIAAGTAVRFEPGQTRTVELVELAGDRAVYGFQGKVMGPL.

It belongs to the urease beta subunit family. Heterotrimer of UreA (gamma), UreB (beta) and UreC (alpha) subunits. Three heterotrimers associate to form the active enzyme.

The protein localises to the cytoplasm. The catalysed reaction is urea + 2 H2O + H(+) = hydrogencarbonate + 2 NH4(+). It functions in the pathway nitrogen metabolism; urea degradation; CO(2) and NH(3) from urea (urease route): step 1/1. The chain is Urease subunit beta from Burkholderia ambifaria (strain ATCC BAA-244 / DSM 16087 / CCUG 44356 / LMG 19182 / AMMD) (Burkholderia cepacia (strain AMMD)).